The primary structure comprises 123 residues: UPF0738 protein BCE33L1094 (123 aa).

This sequence belongs to the UPF0738 family.

This chain is UPF0738 protein BCE33L1094, found in Bacillus cereus (strain ZK / E33L).